Here is a 503-residue protein sequence, read N- to C-terminus: Maturase K (503 aa).

The protein belongs to the intron maturase 2 family. MatK subfamily.

It localises to the plastid. The protein resides in the chloroplast. Usually encoded in the trnK tRNA gene intron. Probably assists in splicing its own and other chloroplast group II introns. The protein is Maturase K of Stangeria eriopus (Natal grass cycad).